The sequence spans 578 residues: GRAM domain-containing protein 4 (578 aa).

Disordered regions lie at residues 23–58 (ESPNASDTECSDEIPLKVPRTSPRDSEELRDPAGPG) and 136–159 (TEEQMAQQPPKGQAQASNGAERRS). 2 positions are modified to phosphoserine: S24 and S28. Over residues 44-53 (SPRDSEELRD) the composition is skewed to basic and acidic residues. The stretch at 83–143 (HLEIALLEKH…ARTEEQMAQQ (61 aa)) forms a coiled coil. The next 3 helical transmembrane spans lie at 240–260 (VYMNAVWHGWAIPLFLFLAIL), 334–354 (ITQKLYVALWAAFLASCFFPY), and 356–376 (LVGLAVGLYAGIKFFLIDFIF). Residues 415 to 435 (QTTSSRSYVPSAPAGLGKEED) form a disordered region. The GRAM domain occupies 445–523 (GNFHEIFNLT…VDITDIQKYK (79 aa)).

In terms of assembly, interacts with RTN4 (isoform B). In terms of tissue distribution, expressed in lung and in primary lung squamous cell carcinoma (LSCC).

It is found in the mitochondrion membrane. It localises to the endoplasmic reticulum membrane. Functionally, plays a role as a mediator of E2F1-induced apoptosis in the absence of p53/TP53. Plays a role as a mediator of E2F1-induced apoptosis in the absence of p53/TP53. Inhibits TLR9 response to nucelic acids and regulates TLR9-mediated innate immune response. The protein is GRAM domain-containing protein 4 of Homo sapiens (Human).